Here is a 542-residue protein sequence, read N- to C-terminus: Chaperonin GroEL 2 (542 aa).

Residues 30–33, Lys51, 87–91, Gly415, and Asp496 each bind ATP; these read TLGP and DGTTT.

Belongs to the chaperonin (HSP60) family. In terms of assembly, forms a cylinder of 14 subunits composed of two heptameric rings stacked back-to-back. Interacts with the co-chaperonin GroES.

It is found in the cytoplasm. It catalyses the reaction ATP + H2O + a folded polypeptide = ADP + phosphate + an unfolded polypeptide.. In terms of biological role, together with its co-chaperonin GroES, plays an essential role in assisting protein folding. The GroEL-GroES system forms a nano-cage that allows encapsulation of the non-native substrate proteins and provides a physical environment optimized to promote and accelerate protein folding. The polypeptide is Chaperonin GroEL 2 (Chelativorans sp. (strain BNC1)).